We begin with the raw amino-acid sequence, 550 residues long: Acetyl-coenzyme A transporter 1 (550 aa).

Basic and acidic residues-rich tracts occupy residues 1–12 (MSPTISHKDSSR) and 36–52 (DDSRRDSVGGEGDREVL). The interval 1–58 (MSPTISHKDSSRQRRSGMFSHALDMKSGPLPPGGWDDSRRDSVGGEGDREVLLGDAGP) is disordered. The Cytoplasmic segment spans residues 1-74 (MSPTISHKDS…PRSYRSELSS (74 aa)). Ser-42 carries the post-translational modification Phosphoserine. Residues 75–95 (ILLLLFLYVLQGIPLGLAGSI) form a helical membrane-spanning segment. Topologically, residues 96–113 (PLILQSKNVSYTDQAFFS) are extracellular. Asn-103 carries N-linked (GlcNAc...) asparagine glycosylation. Residues 114-134 (FVFWPFSLKLLWAPLVDAVYF) form a helical membrane-spanning segment. Topologically, residues 135–141 (KNFGRRK) are cytoplasmic. Residues 142 to 162 (SWLVPTQYTLGIFMIYLSTQV) traverse the membrane as a helical segment. At 163–175 (DRLLGNIDGRTPD) the chain is on the extracellular side. The helical transmembrane segment at 176 to 196 (VVALTVTFFLFEFLAATQDIA) threads the bilayer. Topologically, residues 197 to 217 (VDGWALTMLSRENVGYASTCN) are cytoplasmic. Residues 218-238 (SVGQTAGYFLGNVLFLALESA) traverse the membrane as a helical segment. Residues 239-256 (DFCNKYLRFQPQPRGIVT) lie on the Extracellular side of the membrane. The chain crosses the membrane as a helical span at residues 257–277 (LSDFLFFWGTVFLITTTLVAL). The Cytoplasmic segment spans residues 278–300 (LKKENREASIVKEETQGITDTYK). The helical transmembrane segment at 301 to 321 (LLFSIIKMPAVLAFCLLILTS) threads the bilayer. Residues 322-344 (KIGFSAADAVTGLKLVEEGVPKE) are Extracellular-facing. The chain crosses the membrane as a helical span at residues 345–365 (HLALLAVPMVPLQIILPLLIS). Residues 366–375 (KYTAGPQPLN) lie on the Cytoplasmic side of the membrane. The helical transmembrane segment at 376–396 (IFYKAMPYRLLLGLEYALLVW) threads the bilayer. Over 397–405 (WTPKVEHQG) the chain is Extracellular. Residues 406-426 (GFPLYYYIIVLLSYALHQVTL) traverse the membrane as a helical segment. The Cytoplasmic segment spans residues 427 to 509 (YSMYVSIMAF…LGGSCVTALD (83 aa)). Residues 510–530 (GYYVESIICVLIGFGWWFFLG) traverse the membrane as a helical segment. Residues 531-550 (PKFKKLQDEGPSSWKCKRNN) lie on the Extracellular side of the membrane.

Belongs to the SLC33A transporter family. Homodimerizes. Expressed in all adult tissues examined including brain, heart, kidney, liver and spleen, with maximum expression in liver and kidney.

It localises to the endoplasmic reticulum membrane. The enzyme catalyses acetyl-CoA(in) = acetyl-CoA(out). Its function is as follows. Acetyl-CoA transporter that mediates active acetyl-CoA import through the endoplasmic reticulum (ER) membrane into the ER lumen where specific ER-based acetyl-CoA:lysine acetyltransferases are responsible for the acetylation of ER-based protein substrate, such as BACE1. Necessary for O-acetylation of gangliosides. In Mus musculus (Mouse), this protein is Acetyl-coenzyme A transporter 1 (Slc33a1).